The primary structure comprises 614 residues: MVTPSLTAQADDKQARLKHLIKRLPNLPGVYKMLGKNGDILYVGKAKSLKSRVNSYFAKTIDHPKTRALVSRIHDIETIITRSETEALLLEQNLIKEHRPPYNVLLRDDKSYLYVFISADQPYPRLAYGRGKAKHQKGKFFGPFPSAHAAKETLVLMQKMFQMRQCTNTFFRQRKRPCLEYQIKRCRAPCVGLVSAEEYAADVQNTIRFLKGDSSDIHTTLIEKMEHSAEALDFEKAAFYRDQLSMLREVQSRQAVYTVQGEADIISIASQAGMTCVNVLTVRGGRVLGGKNYFPDVDSNEPINDNLSAFITSFYFQVTDDLPAEIIISHELPDQMALQEALSTYFEAKTVIKTNVREHRAEWLDLAKLNAHNALKTKLGDYLELHARFAALKEVLEPVSQSSIDTIECFDISHTMGEATIASCVVFDQGGARKRDYRQYAIHGVQDGDDYAAMAQAITRRYKKHPLPDVLLIDGGKGQLSMAKNVLTELGLLNDTLLIGVAKGEGRKAGLEVLHFIEHEPLDLPMDSKALHLIMNIRDEAHRFAITAHRKKRDKRRSSSVLEAIPGLGEKRRRDLLNHFGGLQQLLGASQQELEGVNGIGKVMANTIYKVLHE.

Positions 26-104 constitute a GIY-YIG domain; that stretch reads NLPGVYKMLG…IKEHRPPYNV (79 aa). In terms of domain architecture, UVR spans 215-250; the sequence is SDIHTTLIEKMEHSAEALDFEKAAFYRDQLSMLREV.

This sequence belongs to the UvrC family. Interacts with UvrB in an incision complex.

The protein resides in the cytoplasm. Its function is as follows. The UvrABC repair system catalyzes the recognition and processing of DNA lesions. UvrC both incises the 5' and 3' sides of the lesion. The N-terminal half is responsible for the 3' incision and the C-terminal half is responsible for the 5' incision. This chain is UvrABC system protein C, found in Psychrobacter sp. (strain PRwf-1).